Here is a 199-residue protein sequence, read N- to C-terminus: Protein GrpE (199 aa).

A disordered region spans residues 1-40 (MEKKKHGTNSISEALKVKAAVEQETATPEPTPQSETESAD). The span at 24–36 (ETATPEPTPQSET) shows a compositional bias: polar residues.

The protein belongs to the GrpE family. As to quaternary structure, homodimer.

The protein localises to the cytoplasm. Participates actively in the response to hyperosmotic and heat shock by preventing the aggregation of stress-denatured proteins, in association with DnaK and GrpE. It is the nucleotide exchange factor for DnaK and may function as a thermosensor. Unfolded proteins bind initially to DnaJ; upon interaction with the DnaJ-bound protein, DnaK hydrolyzes its bound ATP, resulting in the formation of a stable complex. GrpE releases ADP from DnaK; ATP binding to DnaK triggers the release of the substrate protein, thus completing the reaction cycle. Several rounds of ATP-dependent interactions between DnaJ, DnaK and GrpE are required for fully efficient folding. The chain is Protein GrpE from Geotalea uraniireducens (strain Rf4) (Geobacter uraniireducens).